The primary structure comprises 266 residues: Nickel import ATP-binding protein NikE (266 aa).

The 249-residue stretch at 4 to 252 folds into the ABC transporter domain; the sequence is ISADNIVKIY…RHPASRLLRE (249 aa). 45–52 provides a ligand contact to ATP; that stretch reads GRSGCGKS.

It belongs to the ABC transporter superfamily. Nickel importer (TC 3.A.1.5.3) family. In terms of assembly, the complex is composed of two ATP-binding proteins (NikD and NikE), two transmembrane proteins (NikB and NikC) and a solute-binding protein (NikA).

The protein localises to the cell inner membrane. It carries out the reaction Ni(2+)(out) + ATP + H2O = Ni(2+)(in) + ADP + phosphate + H(+). Functionally, part of the ABC transporter complex NikABCDE involved in nickel import. Responsible for energy coupling to the transport system. The sequence is that of Nickel import ATP-binding protein NikE from Brucella suis biovar 1 (strain 1330).